The primary structure comprises 75 residues: CLAVATA3/ESR (CLE)-related protein 33 (75 aa).

The N-terminal stretch at 1 to 22 is a signal peptide; it reads MASWRMLCFVLLFTSILICHDA. Hydroxyproline is present on residues P67 and P70. The O-linked (Ara...) hydroxyproline glycan is linked to P70.

It belongs to the CLV3/ESR signal peptide family. Post-translationally, the O-glycosylation (arabinosylation) of the hydroxyproline Pro-70 enhances binding affinity of the CLE33p peptide for its receptor. In terms of tissue distribution, expressed in root vasculature.

It is found in the secreted. The protein resides in the extracellular space. Signaling peptide involved in the regulation of root colonization by arbuscular mycorrhizal (AM) fungi. Moves from root to shoot to function with the receptor kinase SUNN, in a signaling pathway that repress strigolactone biosynthetic genes and strigolactone content in the roots, and consequently reduces the promotion of further colonization by AM fungi. The polypeptide is CLAVATA3/ESR (CLE)-related protein 33 (Medicago truncatula (Barrel medic)).